Here is a 1309-residue protein sequence, read N- to C-terminus: DNA repair protein RAD9 (1309 aa).

Positions M1–A19 are enriched in polar residues. The interval M1–P39 is disordered. 3 positions are modified to phosphoserine: S26, S56, and S205. Residue T218 is modified to Phosphothreonine. S248 bears the Phosphoserine mark. Residues N280 to S299 form a disordered region. Over residues I284–S299 the composition is skewed to basic and acidic residues. Phosphoserine is present on residues S312 and S315. The interval N342 to N365 is disordered. Residues S343 to N352 show a composition bias toward polar residues. Position 462 is a phosphoserine (S462). Residues T471 and T474 each carry the phosphothreonine modification. The disordered stretch occupies residues P490 to E512. The span at E491–P508 shows a compositional bias: polar residues. A Phosphoserine modification is found at S568. Disordered regions lie at residues K636–D655 and I691–L731. Residues L642–D655 are compositionally biased toward basic and acidic residues. Position 729 is a phosphoserine (S729). A BRCT domain is found at R994–Y1122.

Physically associates with RAD53.

It localises to the nucleus. In terms of biological role, essential for cell cycle arrest at the G2 stage following DNA damage by X-irradiation or inactivation of DNA ligase. The sequence is that of DNA repair protein RAD9 (RAD9) from Saccharomyces cerevisiae (strain ATCC 204508 / S288c) (Baker's yeast).